We begin with the raw amino-acid sequence, 223 residues long: MVKFAVIVFPGTNCDFETVEAIKRAGGEAERVWYKQSVKDYDGVVIPGGFSYADYLRAGAIAARQKVMEEIRELAEEGRPILGICNGFQILTEANLLPGALRPNKIPRFLCKWVHLKVVDVETPFTYLYEEGEVVRMPIAHAEGNYYIDNPSKVRIVFQYSDEKGSITEEANPNGSVLNIAGVTNKQGNVLGMMPHPERASDRFLGSEDGLKVFKSIVEWMKK.

The region spanning 4–223 (FAVIVFPGTN…FKSIVEWMKK (220 aa)) is the Glutamine amidotransferase type-1 domain. The active-site Nucleophile is the Cys-85. Active-site residues include His-196 and Glu-198.

In terms of assembly, part of the FGAM synthase complex composed of 1 PurL, 1 PurQ and 2 PurS subunits.

It localises to the cytoplasm. It catalyses the reaction N(2)-formyl-N(1)-(5-phospho-beta-D-ribosyl)glycinamide + L-glutamine + ATP + H2O = 2-formamido-N(1)-(5-O-phospho-beta-D-ribosyl)acetamidine + L-glutamate + ADP + phosphate + H(+). It carries out the reaction L-glutamine + H2O = L-glutamate + NH4(+). It functions in the pathway purine metabolism; IMP biosynthesis via de novo pathway; 5-amino-1-(5-phospho-D-ribosyl)imidazole from N(2)-formyl-N(1)-(5-phospho-D-ribosyl)glycinamide: step 1/2. In terms of biological role, part of the phosphoribosylformylglycinamidine synthase complex involved in the purines biosynthetic pathway. Catalyzes the ATP-dependent conversion of formylglycinamide ribonucleotide (FGAR) and glutamine to yield formylglycinamidine ribonucleotide (FGAM) and glutamate. The FGAM synthase complex is composed of three subunits. PurQ produces an ammonia molecule by converting glutamine to glutamate. PurL transfers the ammonia molecule to FGAR to form FGAM in an ATP-dependent manner. PurS interacts with PurQ and PurL and is thought to assist in the transfer of the ammonia molecule from PurQ to PurL. This Pyrococcus horikoshii (strain ATCC 700860 / DSM 12428 / JCM 9974 / NBRC 100139 / OT-3) protein is Phosphoribosylformylglycinamidine synthase subunit PurQ.